A 354-amino-acid polypeptide reads, in one-letter code: DNA polymerase IV 2 (354 aa).

Residues 4–184 (IIHIDMDAFY…LPVKKFHGVG (181 aa)) enclose the UmuC domain. Aspartate 8 and aspartate 102 together coordinate Mg(2+). Glutamate 103 is an active-site residue.

It belongs to the DNA polymerase type-Y family. As to quaternary structure, monomer. Mg(2+) serves as cofactor.

It is found in the cytoplasm. It carries out the reaction DNA(n) + a 2'-deoxyribonucleoside 5'-triphosphate = DNA(n+1) + diphosphate. Its function is as follows. Poorly processive, error-prone DNA polymerase involved in untargeted mutagenesis. Copies undamaged DNA at stalled replication forks, which arise in vivo from mismatched or misaligned primer ends. These misaligned primers can be extended by PolIV. Exhibits no 3'-5' exonuclease (proofreading) activity. May be involved in translesional synthesis, in conjunction with the beta clamp from PolIII. This Rhizobium meliloti (strain 1021) (Ensifer meliloti) protein is DNA polymerase IV 2 (dinB2).